The sequence spans 20 residues: Cicerin (20 aa).

The tract at residues 1–20 (ARCENFADSYRQPPISSSQT) is disordered.

Its function is as follows. Has antifungal activity against B.cinerea, F.oxysporum and M.arachidicola. Inhibits cell-free translation in rabbit reticulocyte lysate system. In Cicer arietinum (Chickpea), this protein is Cicerin.